The primary structure comprises 156 residues: Putative pre-16S rRNA nuclease (156 aa).

It belongs to the YqgF nuclease family.

The protein localises to the cytoplasm. In terms of biological role, could be a nuclease involved in processing of the 5'-end of pre-16S rRNA. The polypeptide is Putative pre-16S rRNA nuclease (Caulobacter vibrioides (strain ATCC 19089 / CIP 103742 / CB 15) (Caulobacter crescentus)).